Consider the following 245-residue polypeptide: 2,3-bisphosphoglycerate-dependent phosphoglycerate mutase (245 aa).

Residues 8–15 (RHGQSLWN), 21–22 (TG), Arg60, 87–90 (ERHY), Lys98, 114–115 (RR), and 183–184 (GN) contribute to the substrate site. His9 serves as the catalytic Tele-phosphohistidine intermediate. Glu87 acts as the Proton donor/acceptor in catalysis.

It belongs to the phosphoglycerate mutase family. BPG-dependent PGAM subfamily.

It catalyses the reaction (2R)-2-phosphoglycerate = (2R)-3-phosphoglycerate. It participates in carbohydrate degradation; glycolysis; pyruvate from D-glyceraldehyde 3-phosphate: step 3/5. Its function is as follows. Catalyzes the interconversion of 2-phosphoglycerate and 3-phosphoglycerate. The polypeptide is 2,3-bisphosphoglycerate-dependent phosphoglycerate mutase (Bacillus thuringiensis subsp. konkukian (strain 97-27)).